Consider the following 254-residue polypeptide: 3-deoxy-manno-octulosonate cytidylyltransferase (254 aa).

It belongs to the KdsB family.

The protein resides in the cytoplasm. The enzyme catalyses 3-deoxy-alpha-D-manno-oct-2-ulosonate + CTP = CMP-3-deoxy-beta-D-manno-octulosonate + diphosphate. It functions in the pathway nucleotide-sugar biosynthesis; CMP-3-deoxy-D-manno-octulosonate biosynthesis; CMP-3-deoxy-D-manno-octulosonate from 3-deoxy-D-manno-octulosonate and CTP: step 1/1. Its pathway is bacterial outer membrane biogenesis; lipopolysaccharide biosynthesis. Its function is as follows. Activates KDO (a required 8-carbon sugar) for incorporation into bacterial lipopolysaccharide in Gram-negative bacteria. The polypeptide is 3-deoxy-manno-octulosonate cytidylyltransferase (Pseudomonas syringae pv. tomato (strain ATCC BAA-871 / DC3000)).